The primary structure comprises 445 residues: Gamma-glutamyl phosphate reductase (445 aa).

The protein belongs to the gamma-glutamyl phosphate reductase family.

It localises to the cytoplasm. It carries out the reaction L-glutamate 5-semialdehyde + phosphate + NADP(+) = L-glutamyl 5-phosphate + NADPH + H(+). It participates in amino-acid biosynthesis; L-proline biosynthesis; L-glutamate 5-semialdehyde from L-glutamate: step 2/2. Catalyzes the NADPH-dependent reduction of L-glutamate 5-phosphate into L-glutamate 5-semialdehyde and phosphate. The product spontaneously undergoes cyclization to form 1-pyrroline-5-carboxylate. The protein is Gamma-glutamyl phosphate reductase of Persephonella marina (strain DSM 14350 / EX-H1).